Consider the following 326-residue polypeptide: Probable cell division protein WhiA (326 aa).

The segment at residues 275-308 (SLEELGALADPPLTKDAIAGRIRRLLALADKRAR) is a DNA-binding region (H-T-H motif).

It belongs to the WhiA family.

Functionally, involved in cell division and chromosome segregation. The polypeptide is Probable cell division protein WhiA (Salinispora tropica (strain ATCC BAA-916 / DSM 44818 / JCM 13857 / NBRC 105044 / CNB-440)).